An 841-amino-acid polypeptide reads, in one-letter code: Probable outer membrane protein pmp2 (841 aa).

The signal sequence occupies residues 1-24 (MKIPLRFLLISLVPTLSMSNLLGA). The 305-residue stretch at 537–841 (GAPYEKRFWV…NVDAGSKIKF (305 aa)) folds into the Autotransporter domain.

Belongs to the PMP outer membrane protein family.

The protein resides in the secreted. The protein localises to the cell wall. Its subcellular location is the cell outer membrane. The polypeptide is Probable outer membrane protein pmp2 (pmp2) (Chlamydia pneumoniae (Chlamydophila pneumoniae)).